The chain runs to 109 residues: MSQYAPSPDFKRALDSSPEANTEDDKTEEDVPMPKNYLWLTIVSCFCPAYPINIVALVFSIMSLNSYNDGDYEGARRLGRNAKWVAIASIIIGLLIIGISCAVHFTRNA.

The disordered stretch occupies residues 1-30; it reads MSQYAPSPDFKRALDSSPEANTEDDKTEED. The Cytoplasmic portion of the chain corresponds to 1–41; it reads MSQYAPSPDFKRALDSSPEANTEDDKTEEDVPMPKNYLWLT. Over residues 21 to 30 the composition is skewed to acidic residues; that stretch reads NTEDDKTEED. Residues 42 to 62 constitute an intramembrane region (helical); it reads IVSCFCPAYPINIVALVFSIM. Residues 63 to 84 are Cytoplasmic-facing; it reads SLNSYNDGDYEGARRLGRNAKW. Residues 85 to 105 traverse the membrane as a helical segment; the sequence is VAIASIIIGLLIIGISCAVHF. Residues 106 to 109 are Extracellular-facing; it reads TRNA.

This sequence belongs to the CD225/Dispanin family. In terms of assembly, interacts with the giant stinging tree toxin ExTxA (AC P0DQP3). Interacts with Nav1.7/SCN9A. Interacts with Nav1.1/SCN1A, Nav1.2/SCN2A, Nav1.3/SCN3A, Nav1.4/SCN4A, Nav1.5/SCN5A, and Nav1.6/SCN8A.

Its subcellular location is the cell membrane. Functionally, probable accessory protein of voltage-gated sodium channels. This chain is Transmembrane protein 233, found in Homo sapiens (Human).